The sequence spans 257 residues: Snake venom serine protease salmonase (257 aa).

Residues 1 to 18 (MVLIRVLVNFLILQLSYA) form the signal peptide. The propeptide occupies 19–24 (QKSSEL). In terms of domain architecture, Peptidase S1 spans 25–248 (VIGGDECNIN…YIDWIQSIIA (224 aa)). Cystine bridges form between C31/C162, C49/C65, C141/C209, C173/C188, and C199/C224. The Charge relay system role is filled by H64. An N-linked (GlcNAc...) asparagine glycan is attached at N78. D109 serves as the catalytic Charge relay system. S203 acts as the Charge relay system in catalysis.

Belongs to the peptidase S1 family. Snake venom subfamily. As to quaternary structure, monomer. In terms of tissue distribution, expressed by the venom gland.

It localises to the secreted. Snake venom serine protease that may act in the hemostasis system of the prey. The chain is Snake venom serine protease salmonase from Gloydius brevicauda (Korean slamosa snake).